The following is a 385-amino-acid chain: T-box transcription factor TBX10 (385 aa).

Positions 69–252 (LEMKPLWEEF…SNPFAKGFRE (184 aa)) form a DNA-binding region, T-box. Disordered stretches follow at residues 283 to 310 (GSAE…NQLL) and 328 to 359 (QNLY…AGDQ). The segment covering 293–307 (KASASSSRTPTQPHN) has biased composition (polar residues). Residues 331–347 (YPGSPSRAGPPRARLAP) show a composition bias toward low complexity.

Its subcellular location is the nucleus. In terms of biological role, probable transcriptional regulator involved in developmental processes. The sequence is that of T-box transcription factor TBX10 (Tbx10) from Mus musculus (Mouse).